Here is a 434-residue protein sequence, read N- to C-terminus: Enolase (434 aa).

The segment at 29–56 (SGHTGRAAVPSGASTGSREALEMRDGDK) is disordered. Residues 47 to 56 (EALEMRDGDK) are compositionally biased toward basic and acidic residues. Q163 lines the (2R)-2-phosphoglycerate pocket. E205 (proton donor) is an active-site residue. Mg(2+) is bound by residues D242, E285, and D312. The (2R)-2-phosphoglycerate site is built by K337, R366, S367, and K388. K337 acts as the Proton acceptor in catalysis.

Belongs to the enolase family. As to quaternary structure, homooctamer. Mg(2+) serves as cofactor.

The protein localises to the cytoplasm. The protein resides in the secreted. It is found in the cell surface. The catalysed reaction is (2R)-2-phosphoglycerate = phosphoenolpyruvate + H2O. The protein operates within carbohydrate degradation; glycolysis; pyruvate from D-glyceraldehyde 3-phosphate: step 4/5. Catalyzes the reversible conversion of 2-phosphoglycerate (2-PG) into phosphoenolpyruvate (PEP). It is essential for the degradation of carbohydrates via glycolysis. This Nitratidesulfovibrio vulgaris (strain DSM 19637 / Miyazaki F) (Desulfovibrio vulgaris) protein is Enolase.